A 425-amino-acid chain; its full sequence is Glucose-6-phosphate 1-dehydrogenase (425 aa).

The NADP(+) site is built by Arg44 and Lys135. The substrate site is built by His165, Lys169, Glu201, and Asp220. Catalysis depends on His225, which acts as the Proton acceptor. Lys311 serves as a coordination point for substrate.

The protein belongs to the glucose-6-phosphate dehydrogenase family.

It catalyses the reaction D-glucose 6-phosphate + NADP(+) = 6-phospho-D-glucono-1,5-lactone + NADPH + H(+). It participates in carbohydrate degradation; pentose phosphate pathway; D-ribulose 5-phosphate from D-glucose 6-phosphate (oxidative stage): step 1/3. Its function is as follows. Catalyzes the oxidation of glucose 6-phosphate to 6-phosphogluconolactone. The sequence is that of Glucose-6-phosphate 1-dehydrogenase from Helicobacter pylori (strain J99 / ATCC 700824) (Campylobacter pylori J99).